A 239-amino-acid chain; its full sequence is Pyridoxine 5'-phosphate synthase (239 aa).

N7 serves as a coordination point for 3-amino-2-oxopropyl phosphate. Residue 9 to 10 participates in 1-deoxy-D-xylulose 5-phosphate binding; it reads DH. A 3-amino-2-oxopropyl phosphate-binding site is contributed by R18. H43 serves as the catalytic Proton acceptor. 1-deoxy-D-xylulose 5-phosphate-binding residues include R45 and H50. E70 functions as the Proton acceptor in the catalytic mechanism. Position 100 (T100) interacts with 1-deoxy-D-xylulose 5-phosphate. H191 (proton donor) is an active-site residue. 3-amino-2-oxopropyl phosphate-binding positions include G192 and 213–214; that span reads GH.

Belongs to the PNP synthase family. As to quaternary structure, homooctamer; tetramer of dimers.

It is found in the cytoplasm. The enzyme catalyses 3-amino-2-oxopropyl phosphate + 1-deoxy-D-xylulose 5-phosphate = pyridoxine 5'-phosphate + phosphate + 2 H2O + H(+). It participates in cofactor biosynthesis; pyridoxine 5'-phosphate biosynthesis; pyridoxine 5'-phosphate from D-erythrose 4-phosphate: step 5/5. Its function is as follows. Catalyzes the complicated ring closure reaction between the two acyclic compounds 1-deoxy-D-xylulose-5-phosphate (DXP) and 3-amino-2-oxopropyl phosphate (1-amino-acetone-3-phosphate or AAP) to form pyridoxine 5'-phosphate (PNP) and inorganic phosphate. This chain is Pyridoxine 5'-phosphate synthase, found in Pelobacter propionicus (strain DSM 2379 / NBRC 103807 / OttBd1).